Here is a 433-residue protein sequence, read N- to C-terminus: Homogentisate 1,2-dioxygenase (433 aa).

The Proton acceptor role is filled by His288. Fe cation-binding residues include His331 and Glu337. Residues Tyr346 and His367 each contribute to the homogentisate site. His367 lines the Fe cation pocket.

It belongs to the homogentisate dioxygenase family. As to quaternary structure, hexamer; dimer of trimers. Fe cation serves as cofactor.

The enzyme catalyses homogentisate + O2 = 4-maleylacetoacetate + H(+). Its pathway is amino-acid degradation; L-phenylalanine degradation; acetoacetate and fumarate from L-phenylalanine: step 4/6. In terms of biological role, involved in the catabolism of homogentisate (2,5-dihydroxyphenylacetate or 2,5-OH-PhAc), a central intermediate in the degradation of phenylalanine and tyrosine. Catalyzes the oxidative ring cleavage of the aromatic ring of homogentisate to yield maleylacetoacetate. The protein is Homogentisate 1,2-dioxygenase of Pseudomonas putida (strain W619).